We begin with the raw amino-acid sequence, 1709 residues long: Hybrid signal transduction histidine kinase L (1709 aa).

4 disordered regions span residues 52 to 192 (SNNN…SPPH), 206 to 276 (FFSG…NSSD), 413 to 535 (TSNS…NNSC), and 554 to 615 (QQQQ…IFNN). The span at 53 to 87 (NNNNNNNNNNNNNNNNNNNNNNNNNNNNNNNNNNN) shows a compositional bias: low complexity. Residues 88–100 (NEEKSNNETEKTL) show a composition bias toward basic and acidic residues. Residues 106-148 (TTTTTTTNNNNNNNNNNNNNNNNNNNNNNNNNNNNNNNNNNTN) are compositionally biased toward low complexity. Residues 149 to 170 (SSNDIYMNSPSSTLSSPGNAGN) show a composition bias toward polar residues. Low complexity-rich tracts occupy residues 413–466 (TSNS…TPNS), 486–535 (NNSP…NNSC), and 554–576 (QQQQ…PTTS). Polar residues predominate over residues 585–610 (LTINTSFKTSPMSSPKSFNKPSQSPQ). A PAS domain is found at 700 to 771 (ATRKMVTCIE…ATLTDKKTWN (72 aa)). One can recognise a PAC domain in the interval 770–822 (WNGFIRTRHNNNTLIYFEASISPVLDQFQQILYYNCTKRDVTQKRIDEESKTL). The Histidine kinase domain maps to 837–1059 (MMSHDIRTPM…TFTCILKFKK (223 aa)). His840 carries the phosphohistidine; by autocatalysis modification. Disordered stretches follow at residues 1068–1112 (LLPA…HQQH) and 1137–1298 (QHQL…PTSP). Low complexity-rich tracts occupy residues 1075–1112 (LQQQ…HQQH), 1137–1153 (QHQL…LQQQ), and 1176–1194 (NQHI…QQQQ). Over residues 1204 to 1221 (HNSHGHNHHGSHHNHNHQ) the composition is skewed to basic residues. 2 stretches are compositionally biased toward polar residues: residues 1244–1257 (NEQQ…NSFS) and 1275–1298 (NISQ…PTSP). Response regulatory domains follow at residues 1312–1492 (KMLF…MMYL) and 1570–1692 (KVLV…KKYG). A 4-aspartylphosphate modification is found at Asp1366. Composition is skewed to low complexity over residues 1390 to 1412 (QHLQ…SELQ) and 1420 to 1440 (KNSS…SSGG). The tract at residues 1390 to 1440 (QHLQQQQEQEQQQQQEQQQSELQKQPDVENKNSSQNNDNNNNNNKSNSSGG) is disordered. A 4-aspartylphosphate modification is found at Asp1622.

Activation probably requires transfer of a phosphate group between a histidine in the kinase core (transmitter) domain and an aspartate of the receiver domain.

It carries out the reaction ATP + protein L-histidine = ADP + protein N-phospho-L-histidine.. Its function is as follows. Acts as a receptor histidine kinase for a signal transduction pathway. This protein undergoes an ATP-dependent autophosphorylation at a conserved histidine residue in the kinase core, and a phosphoryl group is then transferred to a conserved aspartate residue in the receiver domain. The chain is Hybrid signal transduction histidine kinase L (dhkL) from Dictyostelium discoideum (Social amoeba).